The following is a 420-amino-acid chain: Reticulon-4 receptor-like 2 (420 aa).

Positions 1–30 (MLPGLRRLLQGPASACLLLTLLALPSVTPS) are cleaved as a signal peptide. 2 cysteine pairs are disulfide-bonded: Cys31/Cys37 and Cys35/Cys46. The LRRNT domain occupies 31–60 (CPMLCTCYSSPPTVSCQANNFSSVPLSLPP). An N-linked (GlcNAc...) asparagine glycan is attached at Asn50. LRR repeat units follow at residues 61–82 (STQRLFLQNNLIRSLRPGTFGP), 83–104 (NLLTLWLFSNNLSTIHPGTFRH), 107–129 (ALEELDLGDNRHLRSLEPDTFQG), 132–153 (RLQSLHLYRCQLSSLPGNIFRG), 156–177 (SLQYLYLQENSLLHLQDDLFAD), 180–201 (NLSHLFLHGNRLRLLTEHVFRG), 204–225 (SLDRLLLHGNRLQGVHRAAFHG), and 228–249 (RLTILYLFNNSLASLPGEALAD). Asn93 is a glycosylation site (N-linked (GlcNAc...) asparagine). Asn236 is a glycosylation site (N-linked (GlcNAc...) asparagine). Residues 261–312 (NPWACDCRARPLWAWFQRARVSSSDVTCATPPERQGRDLRALRDSDFQACPP) enclose the LRRCT domain. Intrachain disulfides connect Cys265–Cys288 and Cys267–Cys310. The tract at residues 286 to 399 (VTCATPPERQ…CQAPADSRGP (114 aa)) is disordered. The segment covering 294 to 306 (RQGRDLRALRDSD) has biased composition (basic and acidic residues). Residues 315–327 (PTRPGSRARGNSS) are important for interaction with MAG. Residues 351–360 (LPAEDSRGRQ) are compositionally biased toward basic and acidic residues. A lipid anchor (GPI-anchor amidated glycine) is attached at Gly398. The propeptide at 399–420 (PALSAGLRTPLLCLLPLALHHL) is removed in mature form.

It belongs to the Nogo receptor family. In terms of assembly, interaction with MAG is controversial, and may be indirect. Interacts with MAG. Does not interact with OMG and RTN4. In terms of processing, undergoes zinc metalloproteinase-mediated ectodomain shedding in neuroblastoma cells; is released both as a full-length ectodomain and an N-terminal fragment containing the leucine-rich repeat (LRR) region of the protein. N-glycosylated. As to expression, detected in brain. Detected in hippocampus neurons (at protein level).

Its subcellular location is the cell membrane. It is found in the membrane raft. The protein resides in the cell projection. The protein localises to the dendrite. It localises to the axon. Its subcellular location is the perikaryon. In terms of biological role, cell surface receptor that plays a functionally redundant role in the inhibition of neurite outgrowth mediated by MAG. Plays a functionally redundant role in postnatal brain development. Contributes to normal axon migration across the brain midline and normal formation of the corpus callosum. Does not seem to play a significant role in regulating axon regeneration in the adult central nervous system. Protects motoneurons against apoptosis; protection against apoptosis is probably mediated by MAG. Like other family members, plays a role in restricting the number dendritic spines and the number of synapses that are formed during brain development. Signaling mediates activation of Rho and downstream reorganization of the actin cytoskeleton. The chain is Reticulon-4 receptor-like 2 from Mus musculus (Mouse).